A 274-amino-acid chain; its full sequence is Ceramide synthase (274 aa).

The TLC domain maps to 34-261; it reads ADAVIVSARL…ICRGACRLFW (228 aa). The next 4 helical transmembrane spans lie at 130 to 150, 159 to 179, 194 to 214, and 223 to 243; these read FLMVLHHAAMVLVCFPLSVVW, LGCMLMAEVSTPFVCLGKILI, ALMLLSFLCCRVLLFPYLYWA, and LLAVPLAIPAHVNLGAALLLA.

In terms of tissue distribution, expressed in testis. Expressed in the retina with higher expression levels in the macular than in the peripheral region.

The protein resides in the golgi apparatus membrane. It is found in the endoplasmic reticulum membrane. It carries out the reaction sphing-4-enine + octadecanoyl-CoA = N-octadecanoylsphing-4-enine + CoA + H(+). The enzyme catalyses eicosanoyl-CoA + sphing-4-enine = N-eicosanoyl-sphing-4-enine + CoA + H(+). It catalyses the reaction sphing-4-enine + hexadecanoyl-CoA = N-hexadecanoylsphing-4-enine + CoA + H(+). Functionally, involved in ceramide synthesis. The protein is Ceramide synthase of Homo sapiens (Human).